The sequence spans 737 residues: Polyribonucleotide nucleotidyltransferase (737 aa).

Residues Asp489 and Asp495 each contribute to the Mg(2+) site. Residues 556–615 (PKIDTIKIDVDKIKIVIGKGGETIDKIIAETGVKIDIDEEGNVSIYSSDQDAINRAKEII) enclose the KH domain. The S1 motif domain occupies 625–693 (DEVYRAKVVR…EKGRIDASMK (69 aa)). The tract at residues 691–737 (SMKALLPRPPKPEHDEKGEKSERPHRPRHHKDHKPKKEFTETPKDSE) is disordered. Basic and acidic residues predominate over residues 700–714 (PKPEHDEKGEKSERP). Over residues 715–724 (HRPRHHKDHK) the composition is skewed to basic residues. Residues 725–737 (PKKEFTETPKDSE) show a composition bias toward basic and acidic residues.

Belongs to the polyribonucleotide nucleotidyltransferase family. Mg(2+) serves as cofactor.

The protein localises to the cytoplasm. It catalyses the reaction RNA(n+1) + phosphate = RNA(n) + a ribonucleoside 5'-diphosphate. Involved in mRNA degradation. Catalyzes the phosphorolysis of single-stranded polyribonucleotides processively in the 3'- to 5'-direction. This Streptococcus pneumoniae serotype 19F (strain G54) protein is Polyribonucleotide nucleotidyltransferase.